The primary structure comprises 434 residues: GTPase Obg (434 aa).

In terms of domain architecture, Obg spans 1 to 158 (MFLDTAKIKV…RELQLELKIL (158 aa)). The OBG-type G domain occupies 159 to 336 (ADVGLVGFPS…LLDATAELLD (178 aa)). Residues 165–172 (GFPSVGKS), 190–194 (FTTIV), 212–215 (DLPG), 282–285 (NKMD), and 317–319 (SGL) contribute to the GTP site. 2 residues coordinate Mg(2+): S172 and T192. The OCT domain occupies 356–434 (GFDEEEKAFE…IGKFEFEFVD (79 aa)).

It belongs to the TRAFAC class OBG-HflX-like GTPase superfamily. OBG GTPase family. Monomer. Mg(2+) is required as a cofactor.

It is found in the cytoplasm. Its function is as follows. An essential GTPase which binds GTP, GDP and possibly (p)ppGpp with moderate affinity, with high nucleotide exchange rates and a fairly low GTP hydrolysis rate. Plays a role in control of the cell cycle, stress response, ribosome biogenesis and in those bacteria that undergo differentiation, in morphogenesis control. The protein is GTPase Obg of Streptococcus pneumoniae (strain ATCC 700669 / Spain 23F-1).